Reading from the N-terminus, the 648-residue chain is Macrolide export ATP-binding/permease protein MacB (648 aa).

The region spanning 5–243 (LELKDIRRSY…AGGTEPVVNT (239 aa)) is the ABC transporter domain. 41 to 48 (GASGSGKS) is an ATP binding site. A run of 4 helical transmembrane segments spans residues 273-293 (LLTM…VVVG), 523-543 (LFLT…VMNI), 576-596 (AVLV…LIAF), and 600-620 (LFLP…AFLC).

The protein belongs to the ABC transporter superfamily. Macrolide exporter (TC 3.A.1.122) family. As to quaternary structure, homodimer. Part of the tripartite efflux system MacAB-TolC, which is composed of an inner membrane transporter, MacB, a periplasmic membrane fusion protein, MacA, and an outer membrane component, TolC. The complex forms a large protein conduit and can translocate molecules across both the inner and outer membranes. Interacts with MacA.

Its subcellular location is the cell inner membrane. Its function is as follows. Part of the tripartite efflux system MacAB-TolC. MacB is a non-canonical ABC transporter that contains transmembrane domains (TMD), which form a pore in the inner membrane, and an ATP-binding domain (NBD), which is responsible for energy generation. Confers resistance against macrolides. The protein is Macrolide export ATP-binding/permease protein MacB of Shigella flexneri.